Here is a 425-residue protein sequence, read N- to C-terminus: Serine--tRNA ligase (425 aa).

L-serine is bound at residue 228 to 230 (TAE). 259 to 261 (RSE) contributes to the ATP binding site. Glutamate 282 contributes to the L-serine binding site. 346–349 (EIAS) lines the ATP pocket. Serine 382 serves as a coordination point for L-serine.

This sequence belongs to the class-II aminoacyl-tRNA synthetase family. Type-1 seryl-tRNA synthetase subfamily. Homodimer. The tRNA molecule binds across the dimer.

The protein resides in the cytoplasm. It catalyses the reaction tRNA(Ser) + L-serine + ATP = L-seryl-tRNA(Ser) + AMP + diphosphate + H(+). The catalysed reaction is tRNA(Sec) + L-serine + ATP = L-seryl-tRNA(Sec) + AMP + diphosphate + H(+). It participates in aminoacyl-tRNA biosynthesis; selenocysteinyl-tRNA(Sec) biosynthesis; L-seryl-tRNA(Sec) from L-serine and tRNA(Sec): step 1/1. Functionally, catalyzes the attachment of serine to tRNA(Ser). Is also able to aminoacylate tRNA(Sec) with serine, to form the misacylated tRNA L-seryl-tRNA(Sec), which will be further converted into selenocysteinyl-tRNA(Sec). This chain is Serine--tRNA ligase, found in Rickettsia canadensis (strain McKiel).